Reading from the N-terminus, the 208-residue chain is Methyl-CpG-binding domain protein 3-like 4 (208 aa).

This sequence belongs to the MBD3L family.

The chain is Methyl-CpG-binding domain protein 3-like 4 (MBD3L4) from Homo sapiens (Human).